The following is a 355-amino-acid chain: Endonuclease III homolog (355 aa).

A Nuclear localization signal motif is present at residues Pro-44–Gln-50. The HhH domain maps to Phe-122–Ser-149. Lys-142 acts as the Nucleophile; for N-glycosylase activity in catalysis. The [4Fe-4S] cluster site is built by Cys-210, Cys-217, Cys-220, and Cys-228. The short motif at Lys-252–Pro-255 is the Nuclear localization signal element. The tract at residues Lys-303 to Val-355 is disordered. The segment covering Lys-338–Gln-349 has biased composition (polar residues).

This sequence belongs to the Nth/MutY family. The cofactor is [4Fe-4S] cluster.

It is found in the nucleus. The protein localises to the mitochondrion. The enzyme catalyses 2'-deoxyribonucleotide-(2'-deoxyribose 5'-phosphate)-2'-deoxyribonucleotide-DNA = a 3'-end 2'-deoxyribonucleotide-(2,3-dehydro-2,3-deoxyribose 5'-phosphate)-DNA + a 5'-end 5'-phospho-2'-deoxyribonucleoside-DNA + H(+). Its function is as follows. Bifunctional DNA N-glycosylase with associated apurinic/apyrimidinic (AP) lyase function that catalyzes the first step in base excision repair (BER), the primary repair pathway for the repair of oxidative DNA damage. The DNA N-glycosylase activity releases the damaged DNA base from DNA by cleaving the N-glycosidic bond, leaving an AP site. The AP-lyase activity cleaves the phosphodiester bond 3' to the AP site by a beta-elimination. Primarily recognizes and repairs oxidative base damage of pyrimidines. Also has 8-oxo-7,8-dihydroguanine (8-oxoG) DNA glycosylase activity. Also involved in the repair of 7-methylguanine lesions, although it cannot directly repair alkylated DNA bases. Probably does so via excision of methylformamidopyrimidine (mFapy) lesions, a spontaneous processing product of 7-methylguanine. The chain is Endonuclease III homolog (nth1) from Schizosaccharomyces pombe (strain 972 / ATCC 24843) (Fission yeast).